Reading from the N-terminus, the 3084-residue chain is Highly reducing polyketide synthase sdnO (3084 aa).

The 427-residue stretch at 4–430 (PIPLAVVGIA…GTNAHAVLEK (427 aa)) folds into the Ketosynthase family 3 (KS3) domain. Active-site for beta-ketoacyl synthase activity residues include cysteine 178, histidine 313, and histidine 353. The segment at 541-841 (FIFTGQGAQW…LAGPLRQSVA (301 aa)) is malonyl-CoA:ACP transacylase (MAT) domain. Serine 632 acts as the For malonyltransferase activity in catalysis. Residues 931–1071 (HDLLGLRMTD…GSVLIDLVSS (141 aa)) form an N-terminal hotdog fold region. The segment at 931–1243 (HDLLGLRMTD…RSAEADMLVF (313 aa)) is dehydratase (DH) domain. The PKS/mFAS DH domain maps to 931–1275 (HDLLGLRMTD…LRSLAALDGA (345 aa)). Histidine 963 acts as the Proton acceptor; for dehydratase activity in catalysis. Positions 1099 to 1275 (LQPGEDIPPS…LRSLAALDGA (177 aa)) are C-terminal hotdog fold. Catalysis depends on aspartate 1177, which acts as the Proton donor; for dehydratase activity. The interval 1733-2045 (GTAHAATFVE…RHENMTKYVV (313 aa)) is enoylreductase (ER) domain. The segment at 2069–2252 (ATYVVAGGLG…YMALNIGLIE (184 aa)) is catalytic ketoreductase (KRc) domain. The Carrier domain maps to 2363–2440 (DIEAFAARAI…ALARKVTLRS (78 aa)). O-(pantetheine 4'-phosphoryl)serine is present on serine 2400. The tract at residues 2445–2501 (GGAGGDASSTGNSESMARTPSDSSTVPTSIPATPSRSPSREPPAKETLTKSQQHLPI) is disordered. Polar residues predominate over residues 2456–2481 (NSESMARTPSDSSTVPTSIPATPSRS). Residues 2482–2492 (PSREPPAKETL) are compositionally biased toward basic and acidic residues. The choline/carnitine acyltransferase domain stretch occupies residues 2864–3084 (HFYSQLNRAF…LGVVRRVVEG (221 aa)).

It participates in antibiotic biosynthesis. Its function is as follows. Highly reducing polyketide synthase; part of the gene cluster that mediates the biosynthesis of sordarin and hypoxysordarin, glycoside antibiotics with a unique tetracyclic diterpene aglycone structure. First, the geranylgeranyl diphosphate synthase sdnC constructs GGDP from farnesyl diphosphate and isopentenyl diphosphate. The diterpene cyclase sdnA then catalyzes the cyclization of GGDP to afford cycloaraneosene. Cycloaraneosene is then hydroxylated four times by the putative cytochrome P450 monooxygenases sdnB, sdnE, sdnF and sdnH to give a hydroxylated cycloaraneosene derivative such as cycloaraneosene-8,9,13,19-tetraol. Although the order of the hydroxylations is unclear, at least C8, C9 and C13 of the cycloaraneosene skeleton are hydroxylated before the sordaricin formation. Dehydration of the 13-hydroxy group of the hydroxylated cycloaraneosene derivative might be catalyzed by an unassigned hypothetical protein such as sdnG and sdnP to construct the cyclopentadiene moiety. The FAD-dependent oxidoreductase sdnN is proposed to catalyze the oxidation at C9 of the hydroxylated cycloaraneosene derivative and also catalyze the Baeyer-Villiger oxidation to give the lactone intermediate. The presumed lactone intermediate would be hydrolyzed to give an acrolein moiety and a carboxylate moiety. Then, [4+2]cycloaddition would occur between the acrolein moiety and the cyclopentadiene moiety to give sordaricin. SdnN might also be involved in the [4+2]cycloaddition after the hypothesized oxidation to accommodate the oxidized product and prompt the [4+2]cycloaddition. GDP-6-deoxy-D-altrose may be biosynthesized from GDP-D-mannose by the putative GDP-mannose-4,6-dehydratase sdnI and the short-chain dehydrogenase sdnK. The glycosyltransferase sdnJ catalyzes the attachment of 6-deoxy-D-altrose onto the 19-hydroxy group of sordaricin to give 4'-O-demethylsordarin. The methyltransferase sdnD would complete the biosynthesis of sordarin. Sordarin can be further modified into hypoxysordarin. The unique acyl chain at the 3'-hydroxy group of hypoxysordarin would be constructed by an iterative type I PKS sdnO and the trans-acting polyketide methyltransferase sdnL. SdnL would be responsible for the introduction of an alpha-methyl group of the polyketide chain. Alternatively, the putative beta-lactamase-like sdnR might be responsible for the cleavage and transfer of the polyketide chain from the PKS sdnO to sordarin. Two putative cytochrome P450 monooxygenases, sdnQ and sdnT, might catalyze the epoxidations of the polyketide chain to complete the biosynthesis of hypoxysordarin. Transcriptional regulators sdnM and sdnS are presumably encoded for the transcriptional regulation of the expression of the sdn gene cluster. This chain is Highly reducing polyketide synthase sdnO, found in Sordaria araneosa (Pleurage araneosa).